A 270-amino-acid polypeptide reads, in one-letter code: Malonyl-[acyl-carrier protein] O-methyltransferase (270 aa).

This sequence belongs to the methyltransferase superfamily.

It catalyses the reaction malonyl-[ACP] + S-adenosyl-L-methionine = malonyl-[ACP] methyl ester + S-adenosyl-L-homocysteine. It functions in the pathway cofactor biosynthesis; biotin biosynthesis. In terms of biological role, converts the free carboxyl group of a malonyl-thioester to its methyl ester by transfer of a methyl group from S-adenosyl-L-methionine (SAM). It allows to synthesize pimeloyl-ACP via the fatty acid synthetic pathway. This is Malonyl-[acyl-carrier protein] O-methyltransferase from Marinomonas sp. (strain MWYL1).